The chain runs to 302 residues: uncharacterized protein (302 aa).

Positions 13–89 constitute an S4 RNA-binding domain; it reads QTLFKFLKKT…VNLDIVYEDN (77 aa). Aspartate 141 is an active-site residue.

It belongs to the pseudouridine synthase RluA family.

The enzyme catalyses a uridine in RNA = a pseudouridine in RNA. This is an uncharacterized protein from Mycoplasma capricolum subsp. capricolum (strain California kid / ATCC 27343 / NCTC 10154).